A 139-amino-acid polypeptide reads, in one-letter code: Nucleoside diphosphate kinase (139 aa).

ATP is bound by residues lysine 10, phenylalanine 58, arginine 86, threonine 92, arginine 103, and asparagine 113. The active-site Pros-phosphohistidine intermediate is the histidine 116.

It belongs to the NDK family. As to quaternary structure, homotetramer. It depends on Mg(2+) as a cofactor.

Its subcellular location is the cytoplasm. The catalysed reaction is a 2'-deoxyribonucleoside 5'-diphosphate + ATP = a 2'-deoxyribonucleoside 5'-triphosphate + ADP. It catalyses the reaction a ribonucleoside 5'-diphosphate + ATP = a ribonucleoside 5'-triphosphate + ADP. In terms of biological role, major role in the synthesis of nucleoside triphosphates other than ATP. The ATP gamma phosphate is transferred to the NDP beta phosphate via a ping-pong mechanism, using a phosphorylated active-site intermediate. In Desulfovibrio desulfuricans (strain ATCC 27774 / DSM 6949 / MB), this protein is Nucleoside diphosphate kinase.